Here is a 115-residue protein sequence, read N- to C-terminus: Small ribosomal subunit protein uS14m (115 aa).

It belongs to the universal ribosomal protein uS14 family. As to quaternary structure, component of the mitochondrial small ribosomal subunit (mt-SSU). Mature yeast 74S mitochondrial ribosomes consist of a small (37S) and a large (54S) subunit. The 37S small subunit contains a 15S ribosomal RNA (15S mt-rRNA) and 34 different proteins. The 54S large subunit contains a 21S rRNA (21S mt-rRNA) and 46 different proteins.

It is found in the mitochondrion. Functionally, component of the mitochondrial ribosome (mitoribosome), a dedicated translation machinery responsible for the synthesis of mitochondrial genome-encoded proteins, including at least some of the essential transmembrane subunits of the mitochondrial respiratory chain. The mitoribosomes are attached to the mitochondrial inner membrane and translation products are cotranslationally integrated into the membrane. The sequence is that of Small ribosomal subunit protein uS14m (MRP2) from Saccharomyces cerevisiae (strain ATCC 204508 / S288c) (Baker's yeast).